The primary structure comprises 94 residues: Cell division protein FtsB (94 aa).

The Cytoplasmic portion of the chain corresponds to 1 to 3 (MRA). Residues 4–21 (FAVLLIIALGWLQYTLWF) form a helical membrane-spanning segment. Residues 22 to 94 (GKNGMEDYAQ…YRIIDENSEE (73 aa)) are Periplasmic-facing. Residues 40 to 60 (EEVNQGLRNRNGQMFAEIDDL) adopt a coiled-coil conformation.

This sequence belongs to the FtsB family. As to quaternary structure, part of a complex composed of FtsB, FtsL and FtsQ.

It localises to the cell inner membrane. Functionally, essential cell division protein. May link together the upstream cell division proteins, which are predominantly cytoplasmic, with the downstream cell division proteins, which are predominantly periplasmic. This is Cell division protein FtsB from Aliivibrio salmonicida (strain LFI1238) (Vibrio salmonicida (strain LFI1238)).